We begin with the raw amino-acid sequence, 565 residues long: Amino-acid acetyltransferase, mitochondrial (565 aa).

A disordered region spans residues 38-58 (DIATATPAATPSDGAQPPAQN). One can recognise an N-acetyltransferase domain in the interval 352–540 (LPVRVLRSME…EFGGGRLVRV (189 aa)).

This sequence belongs to the acetyltransferase family.

The protein resides in the mitochondrion. The enzyme catalyses L-glutamate + acetyl-CoA = N-acetyl-L-glutamate + CoA + H(+). It functions in the pathway amino-acid biosynthesis; L-arginine biosynthesis; N(2)-acetyl-L-ornithine from L-glutamate: step 1/4. Functionally, N-acetylglutamate synthase involved in arginine biosynthesis. The protein is Amino-acid acetyltransferase, mitochondrial (ARG2) of Cryptococcus neoformans var. neoformans serotype D (strain B-3501A) (Filobasidiella neoformans).